Reading from the N-terminus, the 576-residue chain is Apolipoprotein N-acyltransferase 1 (576 aa).

The next 7 helical transmembrane spans lie at 15–35, 38–58, 60–80, 92–112, 128–148, 168–188, and 204–224; these read LILCFGIGIGTVFGLSPFSFF, GVFASISCIFLFFSLNRTSIW, AFLWLLILSQILNFTAFYWIP, FVSILFFFLYGLISHLKFFLF, YILLIFPAAGTLSDMITFQIF, ICGVYGLSFLLLFISSTFLIL, and IASLICITFIYGFGLYRIGYI. Residues 236–538 enclose the CN hydrolase domain; sequence LSVLMIQPDT…TGTRAFSIRL (303 aa). Glu-285 serves as the catalytic Proton acceptor. The active site involves Lys-355. Residue Cys-446 is the Nucleophile of the active site. Residues 549–569 traverse the membrane as a helical segment; the sequence is FGNSFLWIFCILILISRLIFV.

Belongs to the CN hydrolase family. Apolipoprotein N-acyltransferase subfamily.

It localises to the cell inner membrane. It carries out the reaction N-terminal S-1,2-diacyl-sn-glyceryl-L-cysteinyl-[lipoprotein] + a glycerophospholipid = N-acyl-S-1,2-diacyl-sn-glyceryl-L-cysteinyl-[lipoprotein] + a 2-acyl-sn-glycero-3-phospholipid + H(+). The protein operates within protein modification; lipoprotein biosynthesis (N-acyl transfer). Its function is as follows. Catalyzes the phospholipid dependent N-acylation of the N-terminal cysteine of apolipoprotein, the last step in lipoprotein maturation. The polypeptide is Apolipoprotein N-acyltransferase 1 (Leptospira interrogans serogroup Icterohaemorrhagiae serovar Lai (strain 56601)).